The chain runs to 453 residues: Adenosylmethionine-8-amino-7-oxononanoate aminotransferase (453 aa).

118-119 (GA) lines the pyridoxal 5'-phosphate pocket. Tyr151 is a binding site for substrate. Asp257 contacts pyridoxal 5'-phosphate. Substrate-binding residues include Lys286, Gly321, and Arg416. Residue Lys286 is modified to N6-(pyridoxal phosphate)lysine.

This sequence belongs to the class-III pyridoxal-phosphate-dependent aminotransferase family. BioA subfamily. As to quaternary structure, homodimer. Requires pyridoxal 5'-phosphate as cofactor.

It is found in the cytoplasm. The enzyme catalyses (8S)-8-amino-7-oxononanoate + S-adenosyl-L-methionine = S-adenosyl-4-methylsulfanyl-2-oxobutanoate + (7R,8S)-7,8-diammoniononanoate. It participates in cofactor biosynthesis; biotin biosynthesis; 7,8-diaminononanoate from 8-amino-7-oxononanoate (SAM route): step 1/1. Catalyzes the transfer of the alpha-amino group from S-adenosyl-L-methionine (SAM) to 7-keto-8-aminopelargonic acid (KAPA) to form 7,8-diaminopelargonic acid (DAPA). It is the only aminotransferase known to utilize SAM as an amino donor. The chain is Adenosylmethionine-8-amino-7-oxononanoate aminotransferase from Aquifex aeolicus (strain VF5).